The sequence spans 397 residues: Efflux pump periplasmic linker BepD (397 aa).

The signal sequence occupies residues 1 to 26 (MTLNRTIRCFAAGAAFIVFAAQPALA). A coiled-coil region spans residues 98–139 (APYQAELEKAQAQVAQAEAQYQQSIRDAERAEQLVQQKVQSA).

This sequence belongs to the membrane fusion protein (MFP) (TC 8.A.1) family. In terms of assembly, probably part of a tripartite efflux pump, which is composed of an outer membrane efflux protein, an inner membrane protein and a protein that expands the periplasmic space. Could form a tripartite pump with BepC and BepE.

The protein resides in the periplasm. In terms of biological role, involved in resistance to several unrelated toxic compounds, such as dyes, detergents and antibiotics. The protein is Efflux pump periplasmic linker BepD (bepD) of Brucella suis biovar 1 (strain 1330).